Reading from the N-terminus, the 535-residue chain is Bifunctional purine biosynthesis protein PurH (535 aa).

Residues 1–145 enclose the MGS-like domain; the sequence is MAQTALISVS…KNWKDVGVLT (145 aa).

Belongs to the PurH family.

The enzyme catalyses (6R)-10-formyltetrahydrofolate + 5-amino-1-(5-phospho-beta-D-ribosyl)imidazole-4-carboxamide = 5-formamido-1-(5-phospho-D-ribosyl)imidazole-4-carboxamide + (6S)-5,6,7,8-tetrahydrofolate. It carries out the reaction IMP + H2O = 5-formamido-1-(5-phospho-D-ribosyl)imidazole-4-carboxamide. It functions in the pathway purine metabolism; IMP biosynthesis via de novo pathway; 5-formamido-1-(5-phospho-D-ribosyl)imidazole-4-carboxamide from 5-amino-1-(5-phospho-D-ribosyl)imidazole-4-carboxamide (10-formyl THF route): step 1/1. Its pathway is purine metabolism; IMP biosynthesis via de novo pathway; IMP from 5-formamido-1-(5-phospho-D-ribosyl)imidazole-4-carboxamide: step 1/1. This is Bifunctional purine biosynthesis protein PurH from Variovorax paradoxus (strain S110).